The primary structure comprises 302 residues: Sulfate adenylyltransferase subunit 2 (302 aa).

This sequence belongs to the PAPS reductase family. CysD subfamily. Heterodimer composed of CysD, the smaller subunit, and CysN.

The enzyme catalyses sulfate + ATP + H(+) = adenosine 5'-phosphosulfate + diphosphate. Its pathway is sulfur metabolism; hydrogen sulfide biosynthesis; sulfite from sulfate: step 1/3. With CysN forms the ATP sulfurylase (ATPS) that catalyzes the adenylation of sulfate producing adenosine 5'-phosphosulfate (APS) and diphosphate, the first enzymatic step in sulfur assimilation pathway. APS synthesis involves the formation of a high-energy phosphoric-sulfuric acid anhydride bond driven by GTP hydrolysis by CysN coupled to ATP hydrolysis by CysD. The protein is Sulfate adenylyltransferase subunit 2 of Escherichia coli O81 (strain ED1a).